The following is a 1472-amino-acid chain: ABC multidrug transporter atrI (1472 aa).

The tract at residues 1 to 28 (MRRSNVVPVHSLTSSTNTGRDSRGEKYD) is disordered. Residues 134-384 (FRRETWNFRN…FERQGWFCPP (251 aa)) form the ABC transporter 1 domain. N-linked (GlcNAc...) asparagine glycosylation is found at Asn143, Asn277, Asn308, and Asn332. 7 helical membrane-spanning segments follow: residues 506-526 (ILAL…AGFY), 530-550 (ATLF…INSL), 580-600 (IPVK…LSGL), 605-625 (SQFF…SAVF), 639-659 (MTLA…VVPV), 664-684 (PWFK…ILIA), and 744-764 (FGIL…ATEL). The segment covering 784–793 (AHLKNGHEPG) has biased composition (basic and acidic residues). The segment at 784–821 (AHLKNGHEPGADEEAGAGKTVVSSSAEENKQDQGITSI) is disordered. A compositionally biased stretch (polar residues) spans 804 to 821 (VVSSSAEENKQDQGITSI). In terms of domain architecture, ABC transporter 2 spans 828–1070 (FTWRDVVYDI…TLLKYFESHG (243 aa)). 864–871 (GVSGAGKT) contacts ATP. Helical transmembrane passes span 1168–1188 (YIAA…FSFF), 1204–1224 (VFML…LFIT), 1244–1264 (FMIA…ILVF), 1282–1302 (LVLL…DFVI), 1309–1329 (ETAG…NGVM), and 1337–1357 (GFWI…GMAA). The N-linked (GlcNAc...) asparagine glycan is linked to Asn1402. The helical transmembrane segment at 1433 to 1453 (FGIFWAYVVFDIAVAVMLYYC) threads the bilayer. Residue Asn1460 is glycosylated (N-linked (GlcNAc...) asparagine).

This sequence belongs to the ABC transporter superfamily. ABCG family. PDR (TC 3.A.1.205) subfamily.

It is found in the cell membrane. It catalyses the reaction itraconazole(in) + ATP + H2O = itraconazole(out) + ADP + phosphate + H(+). It carries out the reaction voriconazole(in) + ATP + H2O = voriconazole(out) + ADP + phosphate + H(+). The catalysed reaction is fluconazole(in) + ATP + H2O = fluconazole(out) + ADP + phosphate + H(+). Its function is as follows. Pleiotropic ABC efflux transporter involved in the basal level of azole susceptibility. Confers resistance to fluconazole, itraconazole and voriconazole. The chain is ABC multidrug transporter atrI from Aspergillus fumigatus (strain ATCC MYA-4609 / CBS 101355 / FGSC A1100 / Af293) (Neosartorya fumigata).